The chain runs to 429 residues: Enolase (429 aa).

Glutamine 163 is a binding site for (2R)-2-phosphoglycerate. Glutamate 205 functions as the Proton donor in the catalytic mechanism. Residues aspartate 242, glutamate 287, and aspartate 314 each coordinate Mg(2+). Residues lysine 339, arginine 368, serine 369, and lysine 390 each coordinate (2R)-2-phosphoglycerate. Catalysis depends on lysine 339, which acts as the Proton acceptor.

The protein belongs to the enolase family. It depends on Mg(2+) as a cofactor.

The protein resides in the cytoplasm. It is found in the secreted. Its subcellular location is the cell surface. It carries out the reaction (2R)-2-phosphoglycerate = phosphoenolpyruvate + H2O. It participates in carbohydrate degradation; glycolysis; pyruvate from D-glyceraldehyde 3-phosphate: step 4/5. Its function is as follows. Catalyzes the reversible conversion of 2-phosphoglycerate (2-PG) into phosphoenolpyruvate (PEP). It is essential for the degradation of carbohydrates via glycolysis. This chain is Enolase, found in Anaeromyxobacter dehalogenans (strain 2CP-1 / ATCC BAA-258).